The sequence spans 581 residues: Pentatricopeptide repeat-containing protein At3g56550 (581 aa).

PPR repeat units follow at residues 70–104 (STSD…SVSR), 106–140 (DLFT…GFLD), 141–171 (DAIV…MPVR), 172–206 (DLVS…GVCG), 207–241 (DSYT…RCES), 242–272 (CVFV…MRKR), 273–307 (DVLT…GVRP), 308–338 (NAIT…MSSQ), and 344–378 (NVKH…EDPV). The type E motif stretch occupies residues 379-454 (LWRTLLGSCK…VPGWSWIEIG (76 aa)). The interval 455-485 (DQVHKFVVDDKMHPESAVIYSELGEVINRAI) is type E(+) motif. The interval 486 to 581 (LAGYKPEDSN…DGICSCNDYW (96 aa)) is type DYW motif.

The protein belongs to the PPR family. PCMP-H subfamily.

The sequence is that of Pentatricopeptide repeat-containing protein At3g56550 (PCMP-H80) from Arabidopsis thaliana (Mouse-ear cress).